Here is a 1268-residue protein sequence, read N- to C-terminus: MSGTFSRCMCTPAARVFWNAGQVFCTRCLSARPLLSPELQDTDLGVVGLFYKPKDKIHWKVPIGIPQVECTPSGCCWLSAVFPLARMTSGNHNFLQRLVKVADVLYRDGCLAPRHLRELQVYERGCSWYPITGPVPGMGLFANSMHVSDQPFPGATHVLTNSPLPQRACRQPFCPFEEAHSDVYRWKKFVIFTDSSPNGRFRMMWTPESDDSAALEVLPPELERQVEILTRSFPAHHPINLADWELTESPENGFSFGTSHSCGHIVQNPNVFDGKCWLTCFLGQSAEVCYHEEHLANALGYQTKWGVHGKYLQRRLQVRGMRAVVDPDGPIHVEALSCSQSWVRHLTLNNDVTPGFVRLTSIRIVSNTEPTAFRIFRFGAHKWYGAAGKRARAKRATKSGKDSALAPKIAPPVPTCGITTYSPPTDGSCGWHVLAAIVNRMINGDFTSPLPQYNRPEDDWASDYDLAQAIQCLQLPATVVRNRACPNAKYLIKLNGVHWEVEVRSGMAPRSLSRECVVGVCSEGCVAPPYPADGLPKRALEALASAYRLPSDCVSSGIADFLADPPPQEFWTLDKMLTSPSPERSGFSSLYKLLLEVVPQKCGATEGAFVYAVERMLKDCPSPEQAMALLAKIKVPSSKAPSVSLDECFPAGVPADFEPAFQERPRSPGAAVALCSPDAKGFEGTASEEAQESGHKAVHAVPLAEGPNNEQVQVVAGEQLELGGCGLAIGSAQSSSDSKRENMHNSREDEPLDLSHPAPAATTTLVGEQTPDNPGSDASALPIAVRGFVPTGPILRHVEHCGTESGDSSSPLDLSFAQTLDQPLDLSLAAWPVKATASDPGWVRGRCEPVFLKPRKAFSDGDSALQFGELSESSSVIEFDQTKDTLVADAPVDLTTSNEALSAVDPSEFVELRRPRHSAQALIDRGGPLADVHAKIKNRVYEQCLQACEPGSRATPATREWLDKMWDRVDMKTWRCTSQFQAGRILASLKFLPDMIQDTPPPVPRKNRASDNAGLKQLVARWDKKLSVTPPPKSAGLVLDQTVPPPTDIQQEDATPSDGLSHASDFSSRVSTSWSWKGLMLSGTRLAGSAGQRLMTWVFLKFTPISQLLYSHFSRRGALWLQAIGCLQVLFYLLSCSVVLTQYSDAFPYWVSFLVLCGVFVWVFLVLGWLLLYFYSRLHPTQSVLLVTTIRRNVMLSFWLLSSANFGNLCAALWLAPQVSYVSSLASYSVGHVISGMLSYVYACLQIWPFLLFMWCPKGVVTSVGESV.

The C4-type; atypical zinc-finger motif lies at Cys-8–Cys-28. The Peptidase C31 domain maps to Glu-69 to His-180. The tract at residues Glu-69–Asp-182 is PCP1-alpha. Residues Cys-76 and His-146 each act as for Nsp1-alpha papain-like cysteine proteinase activity in the active site. The PCP1-beta stretch occupies residues Pro-269 to Tyr-384. The region spanning Pro-269–Gly-385 is the Peptidase C32 domain. Residues Cys-276 and His-345 each act as for Nsp1-beta papain-like cysteine proteinase activity in the active site. The 108-residue stretch at Thr-420–Ala-527 folds into the Peptidase C33 domain. Active-site for Nsp2 cysteine proteinase activity residues include Cys-429 and His-498. Disordered stretches follow at residues Ala-728–Ala-758 and Ser-1027–Ser-1064. A compositionally biased stretch (basic and acidic residues) spans Asp-737–Asp-749. A run of 4 helical transmembrane segments spans residues Leu-1119–Val-1139, Phe-1153–Tyr-1173, Val-1194–Trp-1214, and Val-1233–Phe-1253.

The protein localises to the host nucleus. Its subcellular location is the host cytoplasm. The protein resides in the host endoplasmic reticulum membrane. It is found in the membrane. In terms of biological role, is essential for viral subgenomic mRNA synthesis. Inhibits IFN-beta production. Counteracts the action of NF-kappaB by decreasing the phosphorylation of IkappaB-alpha, such that the degradation of IkappaB-alpha is suppressed. This leads to the blockage of NF-kappaB nuclear translocation and thus interference of NF-kappaB activation. Also seems to inhibit IRF3-dependent pathways. Functionally, nsp1-beta transactivates the programmed ribosomal frameshifting event leading to the expression of the 1aTF polyprotein. The polypeptide is Truncated polyprotein 1aTF (Porcine reproductive and respiratory syndrome virus (isolate Pig/United States/SD 01-08/2001) (PRRSV)).